Reading from the N-terminus, the 279-residue chain is tRNA (guanine-N(1)-)-methyltransferase (279 aa).

Residues Gly132 and 152 to 157 each bind S-adenosyl-L-methionine; that span reads IGDYVL.

This sequence belongs to the RNA methyltransferase TrmD family. In terms of assembly, homodimer.

The protein resides in the cytoplasm. The catalysed reaction is guanosine(37) in tRNA + S-adenosyl-L-methionine = N(1)-methylguanosine(37) in tRNA + S-adenosyl-L-homocysteine + H(+). Functionally, specifically methylates guanosine-37 in various tRNAs. The protein is tRNA (guanine-N(1)-)-methyltransferase of Saccharophagus degradans (strain 2-40 / ATCC 43961 / DSM 17024).